The primary structure comprises 509 residues: Maturase K (509 aa).

The protein belongs to the intron maturase 2 family. MatK subfamily.

The protein localises to the plastid. The protein resides in the chloroplast. Its function is as follows. Usually encoded in the trnK tRNA gene intron. Probably assists in splicing its own and other chloroplast group II introns. The polypeptide is Maturase K (Austrocylindropuntia vestita (Cactus)).